The sequence spans 62 residues: UPF0434 protein RHECIAT_CH0004260 (62 aa).

Belongs to the UPF0434 family.

This is UPF0434 protein RHECIAT_CH0004260 from Rhizobium etli (strain CIAT 652).